The primary structure comprises 237 residues: Casparian strip membrane protein 2 (237 aa).

Residues 1 to 48 (MSGSDTSGSVHVDEHGHGHGKASSSYDGAGAPAPAPAPFQGHRKAGSG) form a disordered region. At 1-69 (MSGSDTSGSV…GSGGDGLRRC (69 aa)) the chain is on the cytoplasmic side. A helical transmembrane segment spans residues 70-90 (LGLIDFVLRVAAFGPTLAAAI). At 91–117 (SIGTSDERLSVFTNYFQFRARFDDFPA) the chain is on the extracellular side. Residues 118 to 138 (FEFFIVANAIAAGYMVLSLPF) form a helical membrane-spanning segment. Residues 139-152 (SAATIMSSKATGVK) are Cytoplasmic-facing. The chain crosses the membrane as a helical span at residues 153–173 (LLLLICDTIMVGLLTAAASAA). The Extracellular portion of the chain corresponds to 174–205 (AAMVYVAHEGNLRANWVPICLQFHGFCQRTSG). Residues 206–226 (AVIASFLAVFVLMVLIVMAAF) form a helical membrane-spanning segment. Residues 227-237 (TMPRRTHHTAS) lie on the Cytoplasmic side of the membrane.

Belongs to the Casparian strip membrane proteins (CASP) family. Homodimer and heterodimers.

It is found in the cell membrane. Functionally, regulates membrane-cell wall junctions and localized cell wall deposition. Required for establishment of the Casparian strip membrane domain (CSD) and the subsequent formation of Casparian strips, a cell wall modification of the root endodermis that determines an apoplastic barrier between the intraorganismal apoplasm and the extraorganismal apoplasm and prevents lateral diffusion. This Oryza sativa subsp. japonica (Rice) protein is Casparian strip membrane protein 2.